The primary structure comprises 187 residues: Threonylcarbamoyl-AMP synthase (187 aa).

One can recognise a YrdC-like domain in the interval Thr4 to Leu187.

This sequence belongs to the SUA5 family. TsaC subfamily.

It localises to the cytoplasm. The catalysed reaction is L-threonine + hydrogencarbonate + ATP = L-threonylcarbamoyladenylate + diphosphate + H2O. In terms of biological role, required for the formation of a threonylcarbamoyl group on adenosine at position 37 (t(6)A37) in tRNAs that read codons beginning with adenine. Catalyzes the conversion of L-threonine, HCO(3)(-)/CO(2) and ATP to give threonylcarbamoyl-AMP (TC-AMP) as the acyladenylate intermediate, with the release of diphosphate. The sequence is that of Threonylcarbamoyl-AMP synthase from Xylella fastidiosa (strain M23).